The chain runs to 252 residues: Imidazole glycerol phosphate synthase subunit HisF (252 aa).

Catalysis depends on residues aspartate 11 and aspartate 130.

This sequence belongs to the HisA/HisF family. Heterodimer of HisH and HisF.

It is found in the cytoplasm. It carries out the reaction 5-[(5-phospho-1-deoxy-D-ribulos-1-ylimino)methylamino]-1-(5-phospho-beta-D-ribosyl)imidazole-4-carboxamide + L-glutamine = D-erythro-1-(imidazol-4-yl)glycerol 3-phosphate + 5-amino-1-(5-phospho-beta-D-ribosyl)imidazole-4-carboxamide + L-glutamate + H(+). The protein operates within amino-acid biosynthesis; L-histidine biosynthesis; L-histidine from 5-phospho-alpha-D-ribose 1-diphosphate: step 5/9. Functionally, IGPS catalyzes the conversion of PRFAR and glutamine to IGP, AICAR and glutamate. The HisF subunit catalyzes the cyclization activity that produces IGP and AICAR from PRFAR using the ammonia provided by the HisH subunit. This is Imidazole glycerol phosphate synthase subunit HisF from Paramagnetospirillum magneticum (strain ATCC 700264 / AMB-1) (Magnetospirillum magneticum).